Reading from the N-terminus, the 286-residue chain is NADH-cytochrome b5 reductase 1 (286 aa).

The chain crosses the membrane as a helical span at residues 6–26 (FILVIIGSVALAAGVKYVFTL). Positions 52–155 (QEYRKFQLKE…KGPKGKFNYQ (104 aa)) constitute an FAD-binding FR-type domain. FAD is bound by residues 135–150 (DNMF…GPKG) and 161–193 (SIGM…EISL).

This sequence belongs to the flavoprotein pyridine nucleotide cytochrome reductase family. As to quaternary structure, monomer. FAD serves as cofactor.

The protein resides in the endoplasmic reticulum membrane. Its subcellular location is the mitochondrion outer membrane. The enzyme catalyses 2 Fe(III)-[cytochrome b5] + NADH = 2 Fe(II)-[cytochrome b5] + NAD(+) + H(+). Its function is as follows. Electron donor reductase for cytochrome b5. The cytochrome b5/NADH cytochrome b5 reductase electron transfer system supports the catalytic activity of several sterol biosynthetic enzymes. This Dictyostelium discoideum (Social amoeba) protein is NADH-cytochrome b5 reductase 1 (cyb5r1).